We begin with the raw amino-acid sequence, 276 residues long: Large ribosomal subunit protein uL2 (276 aa).

The disordered stretch occupies residues 223–276 (GSAMNPVDHPHGGGEGKAPIGHPGPLTPWGKPTLGYKTRKKNKPSDKFIVKRRK). The span at 265-276 (KPSDKFIVKRRK) shows a compositional bias: basic and acidic residues.

This sequence belongs to the universal ribosomal protein uL2 family. In terms of assembly, part of the 50S ribosomal subunit. Forms a bridge to the 30S subunit in the 70S ribosome.

Its function is as follows. One of the primary rRNA binding proteins. Required for association of the 30S and 50S subunits to form the 70S ribosome, for tRNA binding and peptide bond formation. It has been suggested to have peptidyltransferase activity; this is somewhat controversial. Makes several contacts with the 16S rRNA in the 70S ribosome. The chain is Large ribosomal subunit protein uL2 from Caldicellulosiruptor saccharolyticus (strain ATCC 43494 / DSM 8903 / Tp8T 6331).